Here is a 526-residue protein sequence, read N- to C-terminus: Cytochrome P450 monooxygenase SAT11 (526 aa).

A helical transmembrane segment spans residues 18 to 38; the sequence is AFLLIAMLYLGYLLCICFYNI. N-linked (GlcNAc...) asparagine glycosylation is found at Asn125 and Asn447. Cys455 contacts heme. An N-linked (GlcNAc...) asparagine glycan is attached at Asn520.

The protein belongs to the cytochrome P450 family. The cofactor is heme.

Its subcellular location is the membrane. It participates in mycotoxin biosynthesis. In terms of biological role, cytochrome P450 monooxygenase; part of the satratoxin SC2 cluster involved in the biosynthesis of satratoxins, trichothecene mycotoxins that are associated with human food poisonings. Satratoxins are suggested to be made by products of multiple gene clusters (SC1, SC2 and SC3) that encode 21 proteins in all, including polyketide synthases, acetyltransferases, and other enzymes expected to modify the trichothecene skeleton. SC1 encodes 10 proteins, SAT1 to SAT10. The largest are SAT8, which encodes a putative polyketide synthase (PKS) with a conventional non-reducing architecture, and SAT10, a putative protein containing four ankyrin repeats and thus may be involved in protein scaffolding. The putative short-chain reductase SAT3 may assist the PKS in some capacity. SAT6 contains a secretory lipase domain and acts probably as a trichothecene esterase. SAT5 encodes a putative acetyltransferase, and so, with SAT6, may affect endogenous protection from toxicity. The probable transcription factor SAT9 may regulate the expression of the SC1 cluster. SC2 encodes proteins SAT11 to SAT16, the largest of which encodes the putative reducing PKS SAT13. SAT11 is a cytochrome P450 monooxygenase, while SAT14 and SAT16 are probable acetyltransferases. The SC2 cluster may be regulated by the transcription factor SAT15. SC3 is a small cluster that encodes 5 proteins, SAT17 to SAT21. SAT21 is a putative MFS-type transporter which may have a role in exporting secondary metabolites. The four other proteins putatively encoded in SC3 include the taurine hydroxylase-like protein SAT17, the O-methyltransferase SAT18, the acetyltransferase SAT19, and the Cys6-type zinc finger SAT20, the latter being probably involved in regulation of SC3 expression. The protein is Cytochrome P450 monooxygenase SAT11 of Stachybotrys chartarum (strain CBS 109288 / IBT 7711) (Toxic black mold).